The primary structure comprises 112 residues: UPF0342 protein STH1710 (112 aa).

It belongs to the UPF0342 family.

The sequence is that of UPF0342 protein STH1710 from Symbiobacterium thermophilum (strain DSM 24528 / JCM 14929 / IAM 14863 / T).